Reading from the N-terminus, the 278-residue chain is DNA oxidative demethylase ALKBH2 (278 aa).

A disordered region spans residues 1 to 49 (MDRFLVKGAVGSLKRRMEQEQTGGGPAGLAEEEGNSKKNPRRAAPGNGV). Positions 3 to 7 (RFLVK) match the PCNA-binding motif. Residues 101 to 103 (FGK) and 121 to 123 (YTF) contribute to the substrate site. In terms of domain architecture, Fe2OG dioxygenase spans 151–256 (TFNFVLINRY…RVNLTFRKIL (106 aa)). Residues asparagine 158, tyrosine 160, and histidine 170 each contribute to the 2-oxoglutarate site. Fe cation is bound by residues histidine 170 and aspartate 172. Aspartate 173 lines the substrate pocket. Residues histidine 235, arginine 247, threonine 251, and arginine 253 each coordinate 2-oxoglutarate. Histidine 235 serves as a coordination point for Fe cation.

This sequence belongs to the alkB family. In terms of assembly, interacts with PCNA homotrimer; this interaction is enhanced during the S-phase of the cell cycle. Interacts with nucleolar proteins NCL, UBTF and NPM1. Interacts with XRCC5-XRCC6 heterodimer. Fe(2+) serves as cofactor.

The protein resides in the nucleus. It localises to the nucleolus. The protein localises to the nucleoplasm. It carries out the reaction a methylated nucleobase within DNA + 2-oxoglutarate + O2 = a nucleobase within DNA + formaldehyde + succinate + CO2. The enzyme catalyses an N(1)-methyl-2'-deoxyadenosine in double-stranded DNA + 2-oxoglutarate + O2 = a 2'-deoxyadenosine in double-stranded DNA + formaldehyde + succinate + CO2 + H(+). The catalysed reaction is an N(1)-methyl-2'-deoxyadenosine in single-stranded DNA + 2-oxoglutarate + O2 = a 2'-deoxyadenosine in single-stranded DNA + formaldehyde + succinate + CO2 + H(+). It catalyses the reaction an N(3)-methyl-2'-deoxycytidine in double-stranded DNA + 2-oxoglutarate + O2 = a 2'-deoxycytidine in double-stranded DNA + formaldehyde + succinate + CO2 + H(+). It carries out the reaction an N(3)-methyl-2'-deoxycytidine in single-stranded DNA + 2-oxoglutarate + O2 = a 2'-deoxycytidine in single-stranded DNA + formaldehyde + succinate + CO2 + H(+). The enzyme catalyses a 1,N(6)-etheno-2'-deoxyadenosine in double-stranded DNA + 2-oxoglutarate + O2 + H2O = a 2'-deoxyadenosine in double-stranded DNA + glyoxal + succinate + CO2. The catalysed reaction is a 1,N(6)-etheno-2'-deoxyadenosine in single-stranded DNA + 2-oxoglutarate + O2 + H2O = a 2'-deoxyadenosine in single-stranded DNA + glyoxal + succinate + CO2. It catalyses the reaction a 3,N(4)-etheno-2'-deoxycytidine in double-stranded DNA + 2-oxoglutarate + O2 + H2O = a 2'-deoxycytidine in double-stranded DNA + glyoxal + succinate + CO2. It carries out the reaction a 3,N(4)-etheno-2'-deoxycytidine in single-stranded DNA + 2-oxoglutarate + O2 + H2O = a 2'-deoxycytidine in single-stranded DNA + glyoxal + succinate + CO2. The enzyme catalyses a 1,N(2)-etheno-2'-deoxyguanosine in double-stranded DNA + 2-oxoglutarate + O2 + H2O = a 2'-deoxyguanosine in double-stranded DNA + glyoxal + succinate + CO2. With respect to regulation, activated by ascorbate and magnesium ions. In terms of biological role, dioxygenase that repairs alkylated nucleic acid bases by direct reversal oxidative dealkylation. Can process both double-stranded (ds) and single-stranded (ss) DNA substrates, with a strong preference for dsDNA. Uses molecular oxygen, 2-oxoglutarate and iron as cofactors to oxidize the alkyl groups that are subsequently released as aldehydes, regenerating the undamaged bases. Probes the base pair stability, locates a weakened base pair and flips the damaged base to accommodate the lesion in its active site for efficient catalysis. Repairs monoalkylated bases, specifically N1-methyladenine and N3-methylcytosine, as well as higher order alkyl adducts such as bases modified with exocyclic bridged adducts known as etheno adducts including 1,N6-ethenoadenine, 3,N4-ethenocytosine and 1,N2-ethenoguanine. Acts as a gatekeeper of genomic integrity under alkylation stress. Efficiently repairs alkylated lesions in ribosomal DNA (rDNA). These lesions can cause ss- and dsDNA strand breaks that severely impair rDNA transcription. In a response mechanism to DNA damage, associates with PCNA at replication forks to repair alkylated adducts prior to replication. This Bos taurus (Bovine) protein is DNA oxidative demethylase ALKBH2 (ALKBH2).